The following is a 102-amino-acid chain: Small ribosomal subunit protein uS10 (102 aa).

This sequence belongs to the universal ribosomal protein uS10 family. As to quaternary structure, part of the 30S ribosomal subunit.

Functionally, involved in the binding of tRNA to the ribosomes. The protein is Small ribosomal subunit protein uS10 of Methylorubrum populi (strain ATCC BAA-705 / NCIMB 13946 / BJ001) (Methylobacterium populi).